A 279-amino-acid polypeptide reads, in one-letter code: B3 domain-containing protein Os05g0481400 (279 aa).

The tract at residues 45–68 is disordered; that stretch reads ARLQKSTRASPKPRKKFEVGATEV. The TF-B3 DNA-binding region spans 139 to 230; sequence FVKTMVRSHV…RFKIYIIKAV (92 aa). 2 stretches are compositionally biased toward acidic residues: residues 233 to 244 and 252 to 262; these read DANESEPADEEA and TEDAAEQDDSP. Positions 233–279 are disordered; the sequence is DANESEPADEEAIGDKDTSTEDAAEQDDSPNAEPLKGTKRRKLRGRR. Residues 269–279 show a composition bias toward basic residues; it reads GTKRRKLRGRR.

It localises to the nucleus. This chain is B3 domain-containing protein Os05g0481400, found in Oryza sativa subsp. japonica (Rice).